The following is a 173-amino-acid chain: Lens fiber membrane intrinsic protein (173 aa).

At 1-3 (MYS) the chain is on the cytoplasmic side. A helical transmembrane segment spans residues 4–24 (FMGGGLFCAWVGTILLVVATA). Over 25-66 (TDHWMQYRLSGAFAHQGLWRYCLGTKCYLQTESIAYWNATRA) the chain is Extracellular. C-linked (Man) tryptophan; partial glycosylation is found at Trp-43 and Trp-61. The chain crosses the membrane as a helical span at residues 67 to 87 (FMILSSLCATSGIIMGIVAFA). Topologically, residues 88–98 (QQPTFTRLSRP) are cytoplasmic. The chain crosses the membrane as a helical span at residues 99–119 (FSAGIMFFASTFFVLLALAIY). Residues 120–140 (TGVTVSFLGRRFGDWRFSWSY) lie on the Extracellular side of the membrane. A helical membrane pass occupies residues 141-161 (ILGWVALLMTFFAGIFYMCAY). The Cytoplasmic portion of the chain corresponds to 162 to 173 (RMHECRRLSTPR). A Phosphoserine modification is found at Ser-170. Thr-171 carries the post-translational modification Phosphothreonine.

It belongs to the PMP-22/EMP/MP20 family. In terms of assembly, seems to be associated with itself or another lens membrane component via disulfide bonds. In terms of processing, predominantly monophosphorylated on Ser-170. Only about 15% diphosphorylated on both Ser-170 and Thr-171. C-glycosylated. Trp-43 is more extensively C-glycosylated than Trp-61. C-glycosylation may be involved in membrane trafficking. As to expression, eye lens specific.

The protein localises to the membrane. Functionally, present in the thicker 16-17 nm junctions of mammalian lens fiber cells, where it may contribute to cell junctional organization. Acts as a receptor for calmodulin. May play an important role in both lens development and cataractogenesis. In Bos taurus (Bovine), this protein is Lens fiber membrane intrinsic protein (LIM2).